The following is a 496-amino-acid chain: Cytochrome P450 3A30 (496 aa).

C441 contacts heme.

It belongs to the cytochrome P450 family. The cofactor is heme. In terms of tissue distribution, highly expressed in liver and intestine. Moderate expression in gill and spleen. Low expression in kidney, brain and heart.

Its subcellular location is the endoplasmic reticulum membrane. The protein localises to the microsome membrane. It carries out the reaction an organic molecule + reduced [NADPH--hemoprotein reductase] + O2 = an alcohol + oxidized [NADPH--hemoprotein reductase] + H2O + H(+). In terms of biological role, putative steroid 6-beta-hydroxylase. The chain is Cytochrome P450 3A30 (cyp3a30) from Fundulus heteroclitus (Killifish).